The sequence spans 163 residues: ATP synthase subunit b 1 (163 aa).

A helical transmembrane segment spans residues 5–25; the sequence is LDATFFAFVGLVLFLALVVYL.

Belongs to the ATPase B chain family. In terms of assembly, F-type ATPases have 2 components, F(1) - the catalytic core - and F(0) - the membrane proton channel. F(1) has five subunits: alpha(3), beta(3), gamma(1), delta(1), epsilon(1). F(0) has three main subunits: a(1), b(2) and c(10-14). The alpha and beta chains form an alternating ring which encloses part of the gamma chain. F(1) is attached to F(0) by a central stalk formed by the gamma and epsilon chains, while a peripheral stalk is formed by the delta and b chains.

It localises to the cell inner membrane. Its function is as follows. F(1)F(0) ATP synthase produces ATP from ADP in the presence of a proton or sodium gradient. F-type ATPases consist of two structural domains, F(1) containing the extramembraneous catalytic core and F(0) containing the membrane proton channel, linked together by a central stalk and a peripheral stalk. During catalysis, ATP synthesis in the catalytic domain of F(1) is coupled via a rotary mechanism of the central stalk subunits to proton translocation. Functionally, component of the F(0) channel, it forms part of the peripheral stalk, linking F(1) to F(0). The chain is ATP synthase subunit b 1 from Rhizobium etli (strain CIAT 652).